The chain runs to 563 residues: Arginine--tRNA ligase (563 aa).

A 'HIGH' region motif is present at residues 122-132 (PNIAKPISMGH).

The protein belongs to the class-I aminoacyl-tRNA synthetase family. Monomer.

It localises to the cytoplasm. It carries out the reaction tRNA(Arg) + L-arginine + ATP = L-arginyl-tRNA(Arg) + AMP + diphosphate. This chain is Arginine--tRNA ligase, found in Latilactobacillus sakei subsp. sakei (strain 23K) (Lactobacillus sakei subsp. sakei).